The sequence spans 95 residues: Large ribosomal subunit protein bL27 (95 aa).

The propeptide occupies 1–6; sequence MILQLF.

Belongs to the bacterial ribosomal protein bL27 family. In terms of processing, the N-terminus is cleaved by ribosomal processing cysteine protease Prp.

In Caldanaerobacter subterraneus subsp. tengcongensis (strain DSM 15242 / JCM 11007 / NBRC 100824 / MB4) (Thermoanaerobacter tengcongensis), this protein is Large ribosomal subunit protein bL27.